The chain runs to 424 residues: Histidine--tRNA ligase (424 aa).

It belongs to the class-II aminoacyl-tRNA synthetase family. As to quaternary structure, homodimer.

The protein resides in the cytoplasm. The catalysed reaction is tRNA(His) + L-histidine + ATP = L-histidyl-tRNA(His) + AMP + diphosphate + H(+). The sequence is that of Histidine--tRNA ligase from Salmonella paratyphi B (strain ATCC BAA-1250 / SPB7).